The following is a 382-amino-acid chain: Serine/threonine-protein kinase US3 homolog (382 aa).

Residues 1 to 10 (MENKQCDHLT) are compositionally biased toward basic and acidic residues. The disordered stretch occupies residues 1–75 (MENKQCDHLT…ASESDEDDDD (75 aa)). Residues 12–24 (WFSTTSDASESMD) show a composition bias toward polar residues. Acidic residues predominate over residues 45-75 (ADEDLYSDISEGDLEYSDCDSASESDEDDDD). The Protein kinase domain maps to 93–379 (YTVIKTLTPG…AEELLSYPMF (287 aa)). Residues 99-107 (LTPGSEGRV) and Lys-122 each bind ATP. Asp-207 serves as the catalytic Proton acceptor.

This sequence belongs to the protein kinase superfamily. Ser/Thr protein kinase family. Phosphorylated by protein 49; this phosphorylation regulates subsequent phosphorylation of proteins 26 and 29 by US3 homolog. Autophosphorylated.

The protein resides in the host cytoplasm. The protein localises to the host nucleus. The catalysed reaction is L-seryl-[protein] + ATP = O-phospho-L-seryl-[protein] + ADP + H(+). It carries out the reaction L-threonyl-[protein] + ATP = O-phospho-L-threonyl-[protein] + ADP + H(+). Functionally, multifunctional serine/threonine kinase that plays a role in several processes including egress of virus particles from the nucleus, modulation of the actin cytoskeleton and inhibition of apoptosis. Phosphorylates protein 26 and 29, two critical regulators of capsid budding from nucleus to endoplasmic reticulum, thereby facilitating virion egress. Modulates and redistributes host components of the nuclear envelope, including LMNA, emerin/EMD and the nuclear matrix protein MATR3. Phosphorylates envelope glycoprotein B (gB), probably to direct it to the cell surface. Promotes virus intracellular spread by restructuring host cell cytoskeleton. Blocks host apoptosis to extend cell survival and allow efficient viral replication. Promotes viral gene expression by phosphorylating host HDAC2 to reduce viral genome silencing. This chain is Serine/threonine-protein kinase US3 homolog, found in Equine herpesvirus 1 (strain Ab4p) (EHV-1).